Here is a 230-residue protein sequence, read N- to C-terminus: Thymine/uracil-DNA glycosylase (230 aa).

[4Fe-4S] cluster is bound by residues Cys204, Cys211, Cys214, and Cys221.

This sequence belongs to the Nth/MutY family. It depends on [4Fe-4S] cluster as a cofactor.

It catalyses the reaction Hydrolyzes mismatched double-stranded DNA and polynucleotides, releasing free thymine.. DNA glycosylase that excises thymine from T/G mismatches and uracil from U/G mismatches. Can also process T/GO and U/GO, but not A/G, T/C and U/C. Has weak AP lyase activity. The polypeptide is Thymine/uracil-DNA glycosylase (Pyrobaculum aerophilum (strain ATCC 51768 / DSM 7523 / JCM 9630 / CIP 104966 / NBRC 100827 / IM2)).